A 253-amino-acid chain; its full sequence is uncharacterized protein (253 aa).

Residues 175–184 are compositionally biased toward polar residues; the sequence is NPTQTSPGKP. The interval 175 to 253 is disordered; the sequence is NPTQTSPGKP…ATENEDRLPS (79 aa). S180 is subject to Phosphoserine. 2 stretches are compositionally biased toward low complexity: residues 185–196 and 203–214; these read STSESSQTDTST and TPTTTRASSYTT. A compositionally biased stretch (polar residues) spans 215 to 242; sequence LVSTSNQVSNEAEASAVETSANQAQNTE.

The protein belongs to the TRAPP small subunits family. BET3 subfamily.

This is an uncharacterized protein from Schizosaccharomyces pombe (strain 972 / ATCC 24843) (Fission yeast).